Reading from the N-terminus, the 417-residue chain is Laccase-like protein claX (417 aa).

The protein belongs to the multicopper oxidase family.

Laccase-like protein; part of the gene cluster that mediates the biosynthesis of clavilactone A, a meroterpenoid that features a unique benzo-fused ten-membered carbocyclic ring unit with an alpha,beta-epoxy-gamma-lactone moiety, forming an intriguing 10/5/3 tricyclic nested skeleton. ClaR, ClaS and ClaT are sufficient to produce clavilactone A and the function of claX, if any, has still to be identified. The biosynthesis begins with the prenyltransferase claS that transfers geranyl pyrophosphate (GPP) to hydroquinone to produces geranylhydroquinon. The cytochrome P450 monooxygenase claR then catalyzes the diradical coupling reaction between the intramolecular hydroquinone and allyl moieties to form the benzo-fused ten-membered carbocyclic ring unit of wigantol. Finally the cytochrome P450 monooxygenase claT exquisitely and stereoselectively assembles the alpha,beta-epoxy-gamma-lactone moiety, producing clavilactone A via arnebinol A. The chain is Laccase-like protein claX from Ampulloclitocybe clavipes (Club foot).